The sequence spans 298 residues: MAVVTMRQLLDSGVHFGHQTRRWNPKMKRFILTERSGSYIIDLQQSLTYIDKTYDFVRETVAHGGTILFVGTKKQAQQAIAEQATRVGQPYVNQRWLGGLLTNFQTVSKRLARMKELEELDFEGTTSGFTKKELLIKKRELDKLHKSLGGIRNLSKTPSALWVVDTKKEHLAIDEAKKLGIPVIAILDTNCDPDEVQYPIPGNDDAIRSVSLLTHIVADAAAEGLIQRHQKPEEGVEAAEPLAEWEQELLAQPAAEVQASAETEKAADADLAEAKADSAAVVAEGEAAADAVAETPAE.

Belongs to the universal ribosomal protein uS2 family.

This Leifsonia xyli subsp. xyli (strain CTCB07) protein is Small ribosomal subunit protein uS2.